The primary structure comprises 545 residues: Chaperonin GroEL 3 (545 aa).

ATP is bound by residues 30–33 (TLGP), Lys-51, 87–91 (DGTTT), Gly-415, and Asp-496.

Belongs to the chaperonin (HSP60) family. As to quaternary structure, forms a cylinder of 14 subunits composed of two heptameric rings stacked back-to-back. Interacts with the co-chaperonin GroES.

The protein localises to the cytoplasm. The enzyme catalyses ATP + H2O + a folded polypeptide = ADP + phosphate + an unfolded polypeptide.. Together with its co-chaperonin GroES, plays an essential role in assisting protein folding. The GroEL-GroES system forms a nano-cage that allows encapsulation of the non-native substrate proteins and provides a physical environment optimized to promote and accelerate protein folding. This is Chaperonin GroEL 3 from Nitrobacter hamburgensis (strain DSM 10229 / NCIMB 13809 / X14).